A 534-amino-acid chain; its full sequence is EH domain-containing protein 1 (534 aa).

M1 carries the N-acetylmethionine modification. The region spanning 55 to 286 is the Dynamin-type G domain; the sequence is FDNKPMVLLV…DLFKDIQSLP (232 aa). Positions 65-72 are G1 motif; the sequence is GQYSTGKT. ATP is bound at residue 65–72; that stretch reads GQYSTGKT. The G2 motif stretch occupies residues 91–92; the sequence is EP. The G3 motif stretch occupies residues 153–156; that stretch reads DTPG. Positions 198 to 227 form a coiled coil; that stretch reads DEFSEVIKALKNHEDKIRVVLNKADQIETQ. The interval 219–222 is G4 motif; it reads NKAD. Position 220 (K220) interacts with ATP. A region of interest (G5 motif) is located at residue I243. W258 contacts ATP. Phosphoserine is present on residues S355 and S456. The 89-residue stretch at 444–532 folds into the EH domain; it reads DKPTYDEIFY…PHLIPPSKRR (89 aa). One can recognise an EF-hand domain in the interval 476–511; the sequence is LPNTVLGKIWKLADVDKDGLLDDEEFALANHLIKVK. Positions 489, 491, 493, and 500 each coordinate Ca(2+).

It belongs to the TRAFAC class dynamin-like GTPase superfamily. Dynamin/Fzo/YdjA family. EHD subfamily. In terms of assembly, homooligomer, and heterooligomer with EHD2, EHD3 and EHD4, ATP-binding is required for heterooligomerization. Interacts (via EH domain) with MICALL1 (via NPF1 motif); the interaction is direct and recruits EHD1 to membranes. Interacts with RAB35; the interaction is indirect through MICALL1 and recruits EHD1 to membranes. Interacts (via EH domain) with PACSIN2 (via NPF motifs); regulates localization to tubular recycling endosome membranes. Interacts with PACSIN1. Interacts with RAB8A. Interacts with FER1L5 (via second C2 domain). Interacts with MYOF. Interacts with ZFYVE20. Interacts (via EH domain) with RAB11FIP2.

Its subcellular location is the recycling endosome membrane. The protein localises to the early endosome membrane. The protein resides in the cell membrane. It localises to the cell projection. It is found in the cilium membrane. Functionally, ATP- and membrane-binding protein that controls membrane reorganization/tubulation upon ATP hydrolysis. In vitro causes vesiculation of endocytic membranes. Acts in early endocytic membrane fusion and membrane trafficking of recycling endosomes. Recruited to endosomal membranes upon nerve growth factor stimulation, indirectly regulates neurite outgrowth. Plays a role in myoblast fusion. Involved in the unidirectional retrograde dendritic transport of endocytosed BACE1 and in efficient sorting of BACE1 to axons implicating a function in neuronal APP processing. Plays a role in the formation of the ciliary vesicle (CV), an early step in cilium biogenesis. Proposed to be required for the fusion of distal appendage vesicles (DAVs) to form the CV by recruiting SNARE complex component SNAP29. Is required for recruitment of transition zone proteins CEP290, RPGRIP1L, TMEM67 and B9D2, and of IFT20 following DAV reorganization before Rab8-dependent ciliary membrane extension. Required for the loss of CCP110 form the mother centriole essential for the maturation of the basal body during ciliogenesis. This Rattus norvegicus (Rat) protein is EH domain-containing protein 1.